Reading from the N-terminus, the 410-residue chain is Lipid droplet-regulating VLDL assembly factor AUP1 (410 aa).

An N-acetylmethionine modification is found at M1. Residues 1 to 20 (MEPPPAPGPERLFDSHRLPS) are Cytoplasmic-facing. Residues 21-41 (DGFLLLALLLYAPVGLCLLVL) lie within the membrane without spanning it. The Cytoplasmic segment spans residues 42–410 (RLFLGLHVFL…FRERQAQEAE (369 aa)). Positions 259 to 293 (LTPADKAEHMKRQRHPRLRPQSVQSSFPSPPSPSS) are disordered. Position 292 is a phosphoserine (S292). Residues 296 to 338 (QLTILAQRVKEVLPHVPLNVIQRDLARTGCVDLTITNLLEGAV) enclose the CUE domain. The interval 348-367 (GSQSLPTASAPKFPSSGLVT) is disordered. Position 363 is a phosphoserine (S363). The residue at position 367 (T367) is a Phosphothreonine.

The protein belongs to the AUP1 family. As to quaternary structure, identified in a complex that contains SEL1L, OS9, FAF2/UBXD8, UBE2J1/UBC6E and AUP1. Interacts with the cytoplasmic tail of ITGA2B, ITGA1, ITGA2, ITGA5, ITGAV and ITGAM. Interacts (via C-terminus) with UBE2G2; the interaction recruits UBE2G2 to lipid droplets. Interacts with ubiquitin ligases AMFR/gp78 and RNF139/TRC8; this promotes interaction of UBE2G2 with AMFR and RNF139. Interacts with apolipoprotein APOB. Post-translationally, monoubiquitinated and diubiquitinated.

It localises to the endoplasmic reticulum membrane. It is found in the lipid droplet. Its function is as follows. Plays a role in the translocation of terminally misfolded proteins from the endoplasmic reticulum lumen to the cytoplasm and their degradation by the proteasome. Plays a role in lipid droplet formation. Induces lipid droplet clustering. Recruits ubiquitin-conjugating enzyme UBE2G2 to lipid droplets which facilitates its interaction with ubiquitin ligases AMFR/gp78 and RNF139/TRC8, leading to sterol-induced ubiquitination of HMGCR and its subsequent proteasomal degradation. Also required for the degradation of INSIG1, SREBF1 and SREBF2. Plays a role in regulating assembly and secretion of very low density lipoprotein particles and stability of apolipoprotein APOB. This is Lipid droplet-regulating VLDL assembly factor AUP1 from Rattus norvegicus (Rat).